The chain runs to 140 residues: Large ribosomal subunit protein uL11 (140 aa).

This sequence belongs to the universal ribosomal protein uL11 family. Part of the ribosomal stalk of the 50S ribosomal subunit. Interacts with L10 and the large rRNA to form the base of the stalk. L10 forms an elongated spine to which L12 dimers bind in a sequential fashion forming a multimeric L10(L12)X complex. In terms of processing, one or more lysine residues are methylated.

In terms of biological role, forms part of the ribosomal stalk which helps the ribosome interact with GTP-bound translation factors. In Geotalea daltonii (strain DSM 22248 / JCM 15807 / FRC-32) (Geobacter daltonii), this protein is Large ribosomal subunit protein uL11.